Reading from the N-terminus, the 943-residue chain is Translation initiation factor IF-2 (943 aa).

Residues 99–113 are compositionally biased toward low complexity; it reads VKAAQTQAAPVQPEQ. The disordered stretch occupies residues 99-354; the sequence is VKAAQTQAAP…LEPNQHAFQA (256 aa). Positions 117 to 141 are enriched in basic and acidic residues; the sequence is DAVKARAEAAARAEARAKAEAEAAK. Over residues 145 to 172 the composition is skewed to low complexity; the sequence is AKAGNKAKPAAQKPTEAKAETAPVAAET. Basic and acidic residues predominate over residues 173–197; the sequence is KPAEPKEKAVKPKHERNGKGKDAKK. A compositionally biased stretch (low complexity) spans 200 to 215; that stretch reads KPAAPAVPQPVVSAEE. Residues 216 to 250 are compositionally biased toward basic and acidic residues; it reads QAQRDEEARRAAALRAHQEALLKEKQERQARREAM. The segment covering 251–264 has biased composition (low complexity); sequence KQQAEQQAKAAQEA. 2 stretches are compositionally biased toward basic and acidic residues: residues 295 to 308 and 319 to 335; these read AKKE…DEGQ and GGRD…ERVR. Residues 443–612 form the tr-type G domain; the sequence is PRPPVVTVMG…LLEAEVLELT (170 aa). The interval 452 to 459 is G1; the sequence is GHVDHGKT. 452–459 provides a ligand contact to GTP; the sequence is GHVDHGKT. The G2 stretch occupies residues 477 to 481; that stretch reads GITQH. The tract at residues 498 to 501 is G3; it reads DTPG. Residues 498–502 and 552–555 contribute to the GTP site; these read DTPGH and NKID. The interval 552 to 555 is G4; sequence NKID. A G5 region spans residues 588–590; that stretch reads SAK.

The protein belongs to the TRAFAC class translation factor GTPase superfamily. Classic translation factor GTPase family. IF-2 subfamily.

The protein resides in the cytoplasm. In terms of biological role, one of the essential components for the initiation of protein synthesis. Protects formylmethionyl-tRNA from spontaneous hydrolysis and promotes its binding to the 30S ribosomal subunits. Also involved in the hydrolysis of GTP during the formation of the 70S ribosomal complex. The protein is Translation initiation factor IF-2 of Neisseria gonorrhoeae (strain ATCC 700825 / FA 1090).